A 408-amino-acid chain; its full sequence is Multidrug resistance protein MdtG (408 aa).

The next 10 membrane-spanning stretches (helical) occupy residues 13–33 (LYIA…VMPF), 51–71 (LWSG…SPFW), 89–109 (LGMA…QFLL), 112–132 (AALG…AIQV), 138–158 (GWAL…GPLL), 170–190 (PVFF…FFFI), 221–241 (LFVT…ILTL), 253–273 (LAFI…LSAP), 287–307 (ILVA…FVQS), and 375–395 (AVFL…WLSL).

It belongs to the major facilitator superfamily. DHA1 family. MdtG (TC 2.A.1.2.20) subfamily.

The protein localises to the cell inner membrane. The protein is Multidrug resistance protein MdtG of Dickeya zeae (strain Ech586) (Dickeya dadantii (strain Ech586)).